The chain runs to 116 residues: Large ribosomal subunit protein bL19 (116 aa).

The protein belongs to the bacterial ribosomal protein bL19 family.

Functionally, this protein is located at the 30S-50S ribosomal subunit interface and may play a role in the structure and function of the aminoacyl-tRNA binding site. In Clostridium beijerinckii (strain ATCC 51743 / NCIMB 8052) (Clostridium acetobutylicum), this protein is Large ribosomal subunit protein bL19.